The primary structure comprises 210 residues: Secreted effector protein SteA (210 aa).

The protein resides in the secreted. It is found in the host cytoplasm. In terms of biological role, effector proteins function to alter host cell physiology and promote bacterial survival in host tissues. Could be required for passage of bacteria from the peritoneal cavity into the spleen, for survival and replication within host cells, or for avoiding host immune response. The protein is Secreted effector protein SteA (steA) of Salmonella typhimurium (strain 14028s / SGSC 2262).